Consider the following 159-residue polypeptide: Phosphopantetheine adenylyltransferase (159 aa).

Thr-9 is a binding site for substrate. Residues 9–10 and His-17 each bind ATP; that span reads TF. Lys-41, Leu-73, and Arg-87 together coordinate substrate. ATP is bound by residues 88–90, Glu-98, and 123–129; these read GLR and YSFISST.

The protein belongs to the bacterial CoaD family. In terms of assembly, homohexamer. Requires Mg(2+) as cofactor.

It localises to the cytoplasm. The catalysed reaction is (R)-4'-phosphopantetheine + ATP + H(+) = 3'-dephospho-CoA + diphosphate. Its pathway is cofactor biosynthesis; coenzyme A biosynthesis; CoA from (R)-pantothenate: step 4/5. Functionally, reversibly transfers an adenylyl group from ATP to 4'-phosphopantetheine, yielding dephospho-CoA (dPCoA) and pyrophosphate. The polypeptide is Phosphopantetheine adenylyltransferase (Pseudomonas putida (strain GB-1)).